Reading from the N-terminus, the 116-residue chain is Protein Rev (116 aa).

Serine 5 and serine 8 each carry phosphoserine; by host CK2. Residues 18-26 form a homomultimerization region; sequence IIKILYQSN. Positions 34-50 match the Nuclear localization signal and RNA-binding (RRE) motif; it reads TRQARRNRRRRWRARQR. The short motif at 73–84 is the Nuclear export signal and binding to XPO1 element; it reads LQLPPLERLTLN. The segment at 87 to 116 is disordered; the sequence is EDCGTSGEKGEGSPQISLESSTILGTGTKE. Phosphoserine; by host occurs at positions 92 and 99. Positions 100–116 are enriched in polar residues; it reads PQISLESSTILGTGTKE.

The protein belongs to the HIV-1 REV protein family. Homomultimer; when bound to the RRE. Multimeric assembly is essential for activity and may involve XPO1. Binds to human KPNB1, XPO1, TNPO1, RANBP5 and IPO7. Interacts with the viral Integrase. Interacts with human KHDRBS1. Interacts with human NAP1; this interaction decreases Rev multimerization and stimulates its activity. Interacts with human DEAD-box helicases DDX3 and DDX24; these interactions may serve for viral RNA export to the cytoplasm and packaging, respectively. Interacts with human PSIP1; this interaction may inhibit HIV-1 DNA integration by promoting dissociation of the Integrase-LEDGF/p75 complex. In terms of processing, asymmetrically arginine dimethylated at one site by host PRMT6. Methylation impairs the RNA-binding activity and export of viral RNA from the nucleus to the cytoplasm. Phosphorylated by protein kinase CK2. Presence of, and maybe binding to the N-terminus of the regulatory beta subunit of CK2 is necessary for CK2-mediated Rev's phosphorylation.

The protein localises to the host nucleus. The protein resides in the host nucleolus. Its subcellular location is the host cytoplasm. In terms of biological role, escorts unspliced or incompletely spliced viral pre-mRNAs (late transcripts) out of the nucleus of infected cells. These pre-mRNAs carry a recognition sequence called Rev responsive element (RRE) located in the env gene, that is not present in fully spliced viral mRNAs (early transcripts). This function is essential since most viral proteins are translated from unspliced or partially spliced pre-mRNAs which cannot exit the nucleus by the pathway used by fully processed cellular mRNAs. Rev itself is translated from a fully spliced mRNA that readily exits the nucleus. Rev's nuclear localization signal (NLS) binds directly to KPNB1/Importin beta-1 without previous binding to KPNA1/Importin alpha-1. KPNB1 binds to the GDP bound form of RAN (Ran-GDP) and targets Rev to the nucleus. In the nucleus, the conversion from Ran-GDP to Ran-GTP dissociates Rev from KPNB1 and allows Rev's binding to the RRE in viral pre-mRNAs. Rev multimerization on the RRE via cooperative assembly exposes its nuclear export signal (NES) to the surface. Rev can then form a complex with XPO1/CRM1 and Ran-GTP, leading to nuclear export of the complex. Conversion from Ran-GTP to Ran-GDP mediates dissociation of the Rev/RRE/XPO1/RAN complex, so that Rev can return to the nucleus for a subsequent round of export. Beside KPNB1, also seems to interact with TNPO1/Transportin-1, RANBP5/IPO5 and IPO7/RANBP7 for nuclear import. The nucleoporin-like HRB/RIP is an essential cofactor that probably indirectly interacts with Rev to release HIV RNAs from the perinuclear region to the cytoplasm. The polypeptide is Protein Rev (Human immunodeficiency virus type 1 group M subtype H (isolate 90CF056) (HIV-1)).